A 206-amino-acid polypeptide reads, in one-letter code: Small ribosomal subunit protein uS4 (206 aa).

The S4 RNA-binding domain occupies 96 to 158; the sequence is SRLDNVVYRM…AKKQSRIKAA (63 aa).

The protein belongs to the universal ribosomal protein uS4 family. In terms of assembly, part of the 30S ribosomal subunit. Contacts protein S5. The interaction surface between S4 and S5 is involved in control of translational fidelity.

One of the primary rRNA binding proteins, it binds directly to 16S rRNA where it nucleates assembly of the body of the 30S subunit. In terms of biological role, with S5 and S12 plays an important role in translational accuracy. In Wigglesworthia glossinidia brevipalpis, this protein is Small ribosomal subunit protein uS4.